We begin with the raw amino-acid sequence, 288 residues long: Purine nucleoside phosphorylase (288 aa).

65 to 66 (RN) serves as a coordination point for phosphate. Met201 contacts substrate. Thr202 lines the phosphate pocket.

Belongs to the PNP/MTAP phosphorylase family. MTAP subfamily. Homotrimer.

The protein localises to the cytoplasm. The protein resides in the nucleus. The catalysed reaction is a purine D-ribonucleoside + phosphate = a purine nucleobase + alpha-D-ribose 1-phosphate. It participates in purine metabolism; purine nucleoside salvage. In terms of biological role, purine nucleoside phosphorylase involved in purine salvage. This Drosophila pseudoobscura pseudoobscura (Fruit fly) protein is Purine nucleoside phosphorylase.